Reading from the N-terminus, the 178-residue chain is Adenine phosphoribosyltransferase (178 aa).

The protein belongs to the purine/pyrimidine phosphoribosyltransferase family. In terms of assembly, homodimer.

The protein resides in the cytoplasm. The catalysed reaction is AMP + diphosphate = 5-phospho-alpha-D-ribose 1-diphosphate + adenine. Its pathway is purine metabolism; AMP biosynthesis via salvage pathway; AMP from adenine: step 1/1. Functionally, catalyzes a salvage reaction resulting in the formation of AMP, that is energically less costly than de novo synthesis. The chain is Adenine phosphoribosyltransferase from Helicobacter hepaticus (strain ATCC 51449 / 3B1).